We begin with the raw amino-acid sequence, 816 residues long: H(+)/Cl(-) exchange transporter 5 (816 aa).

A disordered region spans residues 1–26; that stretch reads MAMWQGAMDNRGFQQGSFSSFQNSSS. Residues 1-124 are Cytoplasmic-facing; sequence MAMWQGAMDN…WALIHSVSDA (124 aa). The span at 12-25 shows a compositional bias: low complexity; sequence GFQQGSFSSFQNSS. Helical transmembrane passes span 125-162 and 208-231; these read FSGWLLMLLIGLLSGSLAGLIDISAHWMTDLKEGICTG and VNYFMYVLWALLFAFLAVSLVKVF. The short motif at 237 to 241 is the Selectivity filter part_1 element; sequence GSGIP. Serine 238 lines the chloride pocket. An intramembrane region (helical) is located at residues 240–247; sequence IPEIKTIL. 2 helical membrane-spanning segments follow: residues 256–275 and 281–300; these read LGKWTLVIKTITLVLAVSSG and EGPLVHVACCCGNILCHCFN. Positions 279-283 match the Selectivity filter part_2 motif; the sequence is GKEGP. Intramembrane regions (helical) lie at residues 312–324 and 328–336; these read VLSAAAAAGVSVA and PIGGVLFSL. The next 5 membrane-spanning stretches (helical) occupy residues 348–366, 389–415, 422–442, 498–518, and 523–542; these read LWRSFFAALVAAFTLRSIN, LVPFILLGIFGGLWGALFIRTNIAWCR, LGKYPVIEVLVVTAITAILAF, MWQLALTLILKIVITIFTFGM, and GLFIPSMAVGAIAGRLLGVG. The short motif at 523–527 is the Selectivity filter part_3 element; it reads GLFIP. Residue phenylalanine 525 coordinates chloride. Positions 570 to 584 form an intramembrane region, helical; it reads GLYAMVGAAACLGGV. The segment at residues 585–587 is an intramembrane region (note=Loop between two helices); the sequence is TRM. Positions 588–599 form an intramembrane region, helical; the sequence is TVSLVVIMFELT. Residues 600-604 constitute an intramembrane region (note=Loop between two helices); it reads GGLEY. A helical transmembrane segment spans residues 605–622; it reads IVPLMAAAMTSKWVADAL. Residues 623–816 lie on the Cytoplasmic side of the membrane; sequence GREGIYDAHI…NQDPDSILFN (194 aa). A chloride-binding site is contributed by tyrosine 628. 2 consecutive CBS domains span residues 656–720 and 752–812; these read MKPR…ARKK and ILDL…DPDS. Residues threonine 666, 687–689, and 794–797 contribute to the ATP site; these read YSG and TKKD.

It belongs to the chloride channel (TC 2.A.49) family. ClC-5/CLCN5 subfamily. In terms of assembly, interacts with NEDD4 and NEDD4L. Ubiquitinated by NEDD4L in the presence of albumin; which promotes endocytosis and proteasomal degradation. As to expression, kidney. Moderately expressed in aortic vascular smooth muscle and endothelial cells, and at a slightly higher level in the coronary vascular smooth muscle.

It localises to the golgi apparatus membrane. The protein localises to the endosome membrane. The protein resides in the cell membrane. The catalysed reaction is 2 chloride(in) + H(+)(out) = 2 chloride(out) + H(+)(in). Proton-coupled chloride transporter. Functions as antiport system and exchanges chloride ions against protons. Important for normal acidification of the endosome lumen. May play an important role in renal tubular function. The CLC channel family contains both chloride channels and proton-coupled anion transporters that exchange chloride or another anion for protons. The absence of conserved gating glutamate residues is typical for family members that function as channels. This Homo sapiens (Human) protein is H(+)/Cl(-) exchange transporter 5.